Consider the following 901-residue polypeptide: Protein translocase subunit SecA 1 (901 aa).

ATP contacts are provided by residues Gln-89, 107–111, and Asp-502; that span reads GEGKT. The tract at residues 856–875 is disordered; the sequence is AEAKASGDARPGFVEDDPST. Cys-885, Cys-887, Cys-896, and His-897 together coordinate Zn(2+).

Belongs to the SecA family. In terms of assembly, monomer and homodimer. Part of the essential Sec protein translocation apparatus which comprises SecA, SecYEG and auxiliary proteins SecDF-YajC and YidC. Requires Zn(2+) as cofactor.

The protein resides in the cell inner membrane. It is found in the cytoplasm. The catalysed reaction is ATP + H2O + cellular proteinSide 1 = ADP + phosphate + cellular proteinSide 2.. Its function is as follows. Part of the Sec protein translocase complex. Interacts with the SecYEG preprotein conducting channel. Has a central role in coupling the hydrolysis of ATP to the transfer of proteins into and across the cell membrane, serving both as a receptor for the preprotein-SecB complex and as an ATP-driven molecular motor driving the stepwise translocation of polypeptide chains across the membrane. The chain is Protein translocase subunit SecA 1 from Ruegeria pomeroyi (strain ATCC 700808 / DSM 15171 / DSS-3) (Silicibacter pomeroyi).